Consider the following 188-residue polypeptide: Elongation factor P (188 aa).

An N6-(3,6-diaminohexanoyl)-5-hydroxylysine modification is found at lysine 34.

Belongs to the elongation factor P family. Post-translationally, may be beta-lysylated on the epsilon-amino group of Lys-34 by the combined action of EpmA and EpmB, and then hydroxylated on the C5 position of the same residue by EpmC (if this protein is present). Lysylation is critical for the stimulatory effect of EF-P on peptide-bond formation. The lysylation moiety may extend toward the peptidyltransferase center and stabilize the terminal 3-CCA end of the tRNA. Hydroxylation of the C5 position on Lys-34 may allow additional potential stabilizing hydrogen-bond interactions with the P-tRNA.

The protein resides in the cytoplasm. The protein operates within protein biosynthesis; polypeptide chain elongation. Involved in peptide bond synthesis. Alleviates ribosome stalling that occurs when 3 or more consecutive Pro residues or the sequence PPG is present in a protein, possibly by augmenting the peptidyl transferase activity of the ribosome. Modification of Lys-34 is required for alleviation. This is Elongation factor P from Vibrio atlanticus (strain LGP32) (Vibrio splendidus (strain Mel32)).